Here is a 292-residue protein sequence, read N- to C-terminus: Glycine--tRNA ligase alpha subunit (292 aa).

This sequence belongs to the class-II aminoacyl-tRNA synthetase family. As to quaternary structure, tetramer of two alpha and two beta subunits.

The protein localises to the cytoplasm. It carries out the reaction tRNA(Gly) + glycine + ATP = glycyl-tRNA(Gly) + AMP + diphosphate. The polypeptide is Glycine--tRNA ligase alpha subunit (Pelotomaculum thermopropionicum (strain DSM 13744 / JCM 10971 / SI)).